The chain runs to 269 residues: GTP cyclohydrolase FolE2 1 (269 aa).

Belongs to the GTP cyclohydrolase IV family.

It carries out the reaction GTP + H2O = 7,8-dihydroneopterin 3'-triphosphate + formate + H(+). It participates in cofactor biosynthesis; 7,8-dihydroneopterin triphosphate biosynthesis; 7,8-dihydroneopterin triphosphate from GTP: step 1/1. Functionally, converts GTP to 7,8-dihydroneopterin triphosphate. In Burkholderia cenocepacia (strain HI2424), this protein is GTP cyclohydrolase FolE2 1.